The primary structure comprises 318 residues: Formimidoylglutamase (318 aa).

His130, Asp155, His157, Asp159, Asp246, and Asp248 together coordinate Mn(2+).

This sequence belongs to the arginase family. The cofactor is Mn(2+).

It carries out the reaction N-formimidoyl-L-glutamate + H2O = formamide + L-glutamate. It functions in the pathway amino-acid degradation; L-histidine degradation into L-glutamate; L-glutamate from N-formimidoyl-L-glutamate (hydrolase route): step 1/1. Catalyzes the conversion of N-formimidoyl-L-glutamate to L-glutamate and formamide. This chain is Formimidoylglutamase, found in Klebsiella pneumoniae (strain 342).